A 412-amino-acid polypeptide reads, in one-letter code: Cinnamoyl-CoA:phenyllactate CoA-transferase (412 aa).

N102 lines the CoA pocket. Catalysis depends on D176, which acts as the Nucleophile.

Homodimer. Part of the heterotrimeric phenyllactate dehydratase complex FldABC, composed of (R)-phenyllactate CoA-transferase (FldA) and a heterodimeric (R)-phenyllactyl-CoA dehydratase (FldB and FldC).

It carries out the reaction (E)-cinnamoyl-CoA + (R)-3-phenyllactate = (R)-3-phenyllactoyl-CoA + (E)-cinnamate. It participates in amino-acid degradation; L-phenylalanine degradation. Component of the phenyllactate dehydratase complex FldABC that is involved in the fermentation of L-phenylalanine via a Stickland reaction. This complex catalyzes the reversible syn-dehydration of (R)-phenyllactate to (E)-cinnamate in two steps, a CoA-transfer from cinnamoyl-CoA to phenyllactate, catalyzed by FldA, followed by the dehydration of phenyllactyl-CoA to cinnamoyl-CoA, catalyzed by FldB and FldC. In vitro, FldA can use 3-phenylpropanoate as a better CoA-acceptor than phenyllactate. The polypeptide is Cinnamoyl-CoA:phenyllactate CoA-transferase (Clostridium sporogenes).